The following is a 391-amino-acid chain: Tryptophan synthase beta chain (391 aa).

The residue at position 84 (K84) is an N6-(pyridoxal phosphate)lysine.

It belongs to the TrpB family. Tetramer of two alpha and two beta chains. The cofactor is pyridoxal 5'-phosphate.

The catalysed reaction is (1S,2R)-1-C-(indol-3-yl)glycerol 3-phosphate + L-serine = D-glyceraldehyde 3-phosphate + L-tryptophan + H2O. It functions in the pathway amino-acid biosynthesis; L-tryptophan biosynthesis; L-tryptophan from chorismate: step 5/5. Functionally, the beta subunit is responsible for the synthesis of L-tryptophan from indole and L-serine. This chain is Tryptophan synthase beta chain, found in Caldanaerobacter subterraneus subsp. tengcongensis (strain DSM 15242 / JCM 11007 / NBRC 100824 / MB4) (Thermoanaerobacter tengcongensis).